Consider the following 217-residue polypeptide: Protein GrpE (217 aa).

Acidic residues-rich tracts occupy residues 1–28, 136–152, and 204–217; these read MSDDQGDAVEASSEADEEASTSPDEGDD, DILDGEGVEAIEPDPGT, and SEAEDDADGEDGDE. Disordered stretches follow at residues 1 to 44, 135 to 157, and 193 to 217; these read MSDD…NDPA, DDILDGEGVEAIEPDPGTETDPK, and QVTVSEGPSGDSEAEDDADGEDGDE.

The protein belongs to the GrpE family. Homodimer.

The protein localises to the cytoplasm. Functionally, participates actively in the response to hyperosmotic and heat shock by preventing the aggregation of stress-denatured proteins, in association with DnaK and GrpE. It is the nucleotide exchange factor for DnaK and may function as a thermosensor. Unfolded proteins bind initially to DnaJ; upon interaction with the DnaJ-bound protein, DnaK hydrolyzes its bound ATP, resulting in the formation of a stable complex. GrpE releases ADP from DnaK; ATP binding to DnaK triggers the release of the substrate protein, thus completing the reaction cycle. Several rounds of ATP-dependent interactions between DnaJ, DnaK and GrpE are required for fully efficient folding. This Natronomonas pharaonis (strain ATCC 35678 / DSM 2160 / CIP 103997 / JCM 8858 / NBRC 14720 / NCIMB 2260 / Gabara) (Halobacterium pharaonis) protein is Protein GrpE.